The following is a 484-amino-acid chain: Rho guanine nucleotide exchange factor 35 (484 aa).

The tract at residues 139 to 418 (FSSDLGSEEE…ALIAPEDSPH (280 aa)) is disordered. Ser184 carries the phosphoserine modification. Positions 217-237 (ESQGLLHPQEVQVLEEQGQQE) are enriched in low complexity. The segment covering 266–278 (NDEKGEQKQKQEQ) has biased composition (basic and acidic residues). The segment covering 299–309 (GLNDGEWEQED) has biased composition (acidic residues). 2 stretches are compositionally biased toward basic and acidic residues: residues 323–368 (GEER…KEKG) and 394–404 (RSREEENEHHG).

This chain is Rho guanine nucleotide exchange factor 35 (ARHGEF35), found in Homo sapiens (Human).